Reading from the N-terminus, the 316-residue chain is Ribosomal RNA small subunit methyltransferase H (316 aa).

Residues 37–39 (GGH), aspartate 56, phenylalanine 83, aspartate 106, and histidine 113 each bind S-adenosyl-L-methionine. Positions 276–316 (PILPSEEETKENPASRSAKLRVLRKTKSADKKYKKENSKEE) are disordered. Residues 302–316 (KSADKKYKKENSKEE) show a composition bias toward basic and acidic residues.

Belongs to the methyltransferase superfamily. RsmH family.

It localises to the cytoplasm. The catalysed reaction is cytidine(1402) in 16S rRNA + S-adenosyl-L-methionine = N(4)-methylcytidine(1402) in 16S rRNA + S-adenosyl-L-homocysteine + H(+). Its function is as follows. Specifically methylates the N4 position of cytidine in position 1402 (C1402) of 16S rRNA. This is Ribosomal RNA small subunit methyltransferase H from Leptospira borgpetersenii serovar Hardjo-bovis (strain L550).